The chain runs to 283 residues: Tropomyosin (283 aa).

Residues 1–283 (MDAIKKKMQA…LDSAFVELIL (283 aa)) are a coiled coil.

It belongs to the tropomyosin family. As to quaternary structure, homodimer.

Its function is as follows. Tropomyosin, in association with the troponin complex, plays a central role in the calcium dependent regulation of muscle contraction. This is Tropomyosin from Locusta migratoria (Migratory locust).